Consider the following 521-residue polypeptide: Vang-like protein 2 (521 aa).

The tract at residues 1–81 (MDNDSQYSGY…TTVVTGTSEH (81 aa)) is disordered. The Cytoplasmic segment spans residues 1–108 (MDNDSQYSGY…AKLDCSRHLG (108 aa)). Residues 15 to 33 (GHSRSSRKHRDRRERHRSK) are compositionally biased toward basic residues. Residues 57-67 (ESTRGEDRDDN) show a composition bias toward basic and acidic residues. Low complexity predominate over residues 69-81 (GETTTVVTGTSEH). The chain crosses the membrane as a helical span at residues 109 to 129 (VVIGGALALLSFLTPIAFMLL). Topologically, residues 130-147 (PQILWREDLEQCGTACEG) are extracellular. The helical transmembrane segment at 148–168 (LFISVAFKLLILLLGSWALFF) threads the bilayer. Residues 169 to 178 (RRPKAFFPRV) are Cytoplasmic-facing. Residues 179-199 (FVFRALLMVLVFLLVVSYWLF) traverse the membrane as a helical segment. Over 200-218 (YGVRILESRDKNYQGIVQY) the chain is Extracellular. The chain crosses the membrane as a helical span at residues 219-239 (AVSLVDALLFVHYLAVVLLEL). The Cytoplasmic portion of the chain corresponds to 240–521 (RQLQPQFTVK…VMRLQSETSV (282 aa)). Residues 518–521 (ETSV) carry the PDZ-binding motif.

Belongs to the Vang family. In terms of assembly, interacts with dvl/dsh. Interacts with prickle3.

The protein resides in the cell membrane. In terms of biological role, has a role in non-canonical Wnt/planar cell polarity (PCP) signaling; can recruit dvl/dsh and prickle from the cytoplasm to the plasma membrane. Acts in a PCP complex to regulate the polarized assembly of fibronectrin on the surface of the mesoderm during gastrulation. Regulates convergent extension in both dorsal mesoderm and neural tissue without affecting cell fate. Regulates neural fold closure during neurulation. May be required for cell surface localization of fzd3 and fzd6 in the inner ear. The polypeptide is Vang-like protein 2 (Xenopus tropicalis (Western clawed frog)).